The primary structure comprises 424 residues: MSAESTCRRCDGPTAIKTRQANFCQPCFITFIQQKQRKAMEGCKVLFARPGCVLPPAINILVPISFGQSSLALLDMAHAQLEEQAKTYENAAGFTLNAVFIDCSEADPLEKEPNQIISELEKRFAHAKFTCIPLSKAFEGASSVTLKHNRDYTSFVSGISEEPTSVQQLLSCIGTKSAREDIISVLQRHLIIEEAKKQNESLPTTVAWGHNATRLAELTLSLTIKGRGNRIHAQVLEHKNPKDSISGLPEIHPLNDVLSYEIPFYNSFRNVSDLAVDTVSKPSQVTKNLSIDQLMHQYFENIQTNFPSIASTVVRTAAKLDDPNAAKQGLTPCLICASPVDPNQSLAWLTNITVNEPAAPETEEEEELSKKAHMEKSQEKTGDADRHLPVPNLCYGCIITIRDTDSFTFPKRASKQDILDEFTL.

The disordered stretch occupies residues proline 357–aspartate 385. A compositionally biased stretch (basic and acidic residues) spans leucine 368–aspartate 385.

This sequence belongs to the CTU2/NCS2 family.

The protein resides in the cytoplasm. It functions in the pathway tRNA modification; 5-methoxycarbonylmethyl-2-thiouridine-tRNA biosynthesis. Its function is as follows. Plays a central role in 2-thiolation of mcm(5)S(2)U at tRNA wobble positions of tRNA(Lys), tRNA(Glu) and tRNA(Gln). May act by forming a heterodimer with NCS6 that ligates sulfur from thiocarboxylated URM1 onto the uridine of tRNAs at wobble position. Prior mcm(5) tRNA modification by the elongator complex is required for 2-thiolation. May also be involved in protein urmylation. This Yarrowia lipolytica (strain CLIB 122 / E 150) (Yeast) protein is Cytoplasmic tRNA 2-thiolation protein 2.